We begin with the raw amino-acid sequence, 235 residues long: MCRLAKIISNAGVCSRRNAEKLIVGGKVKIDGITILSPATNVDMSNQIEVSGRLINNTQKPRLWIYYKPVGLITTHKDPLSRKTVFEQLIGLPRVISIGRLDLNSEGLLLLTNSGDLAHQFEMPASKLKRVYNVRAYGNPNILLKNNYKNLKIDGIFYNPHSIKLLRQNKSNSWFEVVLFEGKNREIRRIFEYFGLQVNKLIRIQYGALKIGNLKPGNYQEISNKILEKQLVMCF.

The region spanning 2–69 (CRLAKIISNA…KPRLWIYYKP (68 aa)) is the S4 RNA-binding domain. The active-site Nucleophile is the Asp102.

The protein belongs to the pseudouridine synthase RsuA family.

The enzyme catalyses a uridine in RNA = a pseudouridine in RNA. This is an uncharacterized protein from Rickettsia prowazekii (strain Madrid E).